We begin with the raw amino-acid sequence, 311 residues long: Aspartate carbamoyltransferase catalytic subunit (311 aa).

The carbamoyl phosphate site is built by Arg-55 and Thr-56. L-aspartate is bound at residue Lys-85. Carbamoyl phosphate is bound by residues Arg-106, His-135, and Gln-138. L-aspartate-binding residues include Arg-168 and Arg-230. The carbamoyl phosphate site is built by Leu-268 and Pro-269.

It belongs to the aspartate/ornithine carbamoyltransferase superfamily. ATCase family. As to quaternary structure, heterododecamer (2C3:3R2) of six catalytic PyrB chains organized as two trimers (C3), and six regulatory PyrI chains organized as three dimers (R2).

The catalysed reaction is carbamoyl phosphate + L-aspartate = N-carbamoyl-L-aspartate + phosphate + H(+). The protein operates within pyrimidine metabolism; UMP biosynthesis via de novo pathway; (S)-dihydroorotate from bicarbonate: step 2/3. Its function is as follows. Catalyzes the condensation of carbamoyl phosphate and aspartate to form carbamoyl aspartate and inorganic phosphate, the committed step in the de novo pyrimidine nucleotide biosynthesis pathway. The polypeptide is Aspartate carbamoyltransferase catalytic subunit (Escherichia fergusonii (strain ATCC 35469 / DSM 13698 / CCUG 18766 / IAM 14443 / JCM 21226 / LMG 7866 / NBRC 102419 / NCTC 12128 / CDC 0568-73)).